We begin with the raw amino-acid sequence, 44 residues long: uncharacterized protein (44 aa).

Its subcellular location is the plastid. It localises to the chloroplast. This is an uncharacterized protein from Trieres chinensis (Marine centric diatom).